Consider the following 267-residue polypeptide: 5'-nucleotidase SurE (267 aa).

A divalent metal cation contacts are provided by D9, D10, S40, and N97.

Belongs to the SurE nucleotidase family. It depends on a divalent metal cation as a cofactor.

It localises to the cytoplasm. It carries out the reaction a ribonucleoside 5'-phosphate + H2O = a ribonucleoside + phosphate. In terms of biological role, nucleotidase that shows phosphatase activity on nucleoside 5'-monophosphates. This Helicobacter pylori (strain ATCC 700392 / 26695) (Campylobacter pylori) protein is 5'-nucleotidase SurE.